Reading from the N-terminus, the 241-residue chain is Uridylate kinase (241 aa).

15–18 lines the ATP pocket; that stretch reads KLSG. An involved in allosteric activation by GTP region spans residues 23 to 28; that stretch reads GAEGFG. Gly57 contributes to the UMP binding site. Residues Gly58 and Arg62 each coordinate ATP. UMP-binding positions include Asp77 and 138–145; that span reads TGNPFFTT. Residues Thr165, Phe171, and Asp174 each contribute to the ATP site.

This sequence belongs to the UMP kinase family. In terms of assembly, homohexamer.

It is found in the cytoplasm. The enzyme catalyses UMP + ATP = UDP + ADP. The protein operates within pyrimidine metabolism; CTP biosynthesis via de novo pathway; UDP from UMP (UMPK route): step 1/1. Allosterically activated by GTP. Inhibited by UTP. Catalyzes the reversible phosphorylation of UMP to UDP. This is Uridylate kinase from Sodalis glossinidius (strain morsitans).